Reading from the N-terminus, the 355-residue chain is ISSQQTIPPSAKYGGRHTVTMIPGDGIGPELMLHVKSVFRHACVPVDFEEVHVSSNADEEDIRNAIMAIRRNRVALKGNIETNHNLPPSHKSRNNILRTSLDLYANVIHCKSLPGVVTRHKDIDILIVRENTEGEYSSLEHESVAGVVESLKIITKAKSLRIAEYAFKLAQESGRKKVTAVHKANIMKLGDGLFLQCCREVAARYPQITFENMIVDNTTMQLVSRPQQFDVMVMPNLYGNIVNNVCAGLVGGPGLVAGANYGHVYAVFETATRNTGKSIANKNIANPTATLLASCMMLDHLKLHSYATSIRKAVLASMDNENMHTPDIGGQGTTSEAIQDIIRHIRVINGRAVEA.

Position 1 (Ile1) is a transit peptide, mitochondrion. 2 residues coordinate citrate: Thr82 and Asn95. Positions 98, 129, and 216 each coordinate substrate. Asp216 lines the Mn(2+) pocket. Positions 274, 275, and 286 each coordinate ADP.

It belongs to the isocitrate and isopropylmalate dehydrogenases family. Heterooligomer of subunits alpha (IDH3A), beta (IDH3B), and gamma (IDH3G) in the apparent ratio of 2:1:1. The heterodimer containing one IDH3A and one IDH3B subunit and the heterodimer containing one IDH3A and one IDH3G subunit assemble into a heterotetramer (which contains two subunits of IDH3A, one of IDH3B and one of IDH3G) and further into the heterooctamer. Requires Mg(2+) as cofactor. Mn(2+) serves as cofactor.

The protein resides in the mitochondrion. Its activity is regulated as follows. The heterotetramer and the heterodimer composed of IDH3A and IDH3G subunits can be allosterically activated by citrate (CIT) or/and ADP, and the two activators can act independently or synergistically. The heterodimer composed of IDH3A and IDH3B subunits cannot be allosterically regulated and the allosteric regulation of the heterotetramer is through the IDH3G subunit and not the IDH3B subunit. The IDH3G subunit contains the allosteric site which consists of a CIT-binding site and an ADP-binding site, and the binding of CIT and ADP causes conformational changes at the allosteric site which are transmitted to the active site in the catalytic subunit (IDH3A) through a cascade of conformational changes at the heterodimer interface, leading to stabilization of the isocitrate-binding at the active site and thus activation of the enzyme. ATP can activate the heterotetramer and the heterodimer composed of IDH3A and IDH3G subunits at low concentrations but inhibits their activities at high concentrations, whereas ATP exhibits only inhibitory effect on the heterodimer composed of IDH3A and IDH3B subunits. Regulatory subunit which plays a role in the allosteric regulation of the enzyme catalyzing the decarboxylation of isocitrate (ICT) into alpha-ketoglutarate. The heterodimer composed of the alpha (IDH3A) and beta (IDH3B) subunits and the heterodimer composed of the alpha (IDH3A) and gamma (IDH3G) subunits, have considerable basal activity but the full activity of the heterotetramer (containing two subunits of IDH3A, one of IDH3B and one of IDH3G) requires the assembly and cooperative function of both heterodimers. This chain is Isocitrate dehydrogenase [NAD] subunit gamma, mitochondrial (IDH3G), found in Macaca fascicularis (Crab-eating macaque).